We begin with the raw amino-acid sequence, 293 residues long: Undecaprenyl-diphosphatase (293 aa).

The next 8 membrane-spanning stretches (helical) occupy residues Ile-3–Pro-23, Lys-43–Phe-63, Ala-85–Ile-105, Leu-109–Ala-129, Phe-178–Gly-198, Val-203–Glu-223, Ile-238–Leu-258, and Phe-269–Val-289.

It belongs to the UppP family.

The protein resides in the cell inner membrane. It carries out the reaction di-trans,octa-cis-undecaprenyl diphosphate + H2O = di-trans,octa-cis-undecaprenyl phosphate + phosphate + H(+). Catalyzes the dephosphorylation of undecaprenyl diphosphate (UPP). Confers resistance to bacitracin. The chain is Undecaprenyl-diphosphatase from Cupriavidus necator (strain ATCC 17699 / DSM 428 / KCTC 22496 / NCIMB 10442 / H16 / Stanier 337) (Ralstonia eutropha).